Consider the following 207-residue polypeptide: Serotonin N-acetyltransferase (207 aa).

The disordered stretch occupies residues 1-28; that stretch reads MSMQSTHPPKPEAPRLPPGIPESPSCQR. T31 carries the post-translational modification Phosphothreonine; by PKA. The 168-residue stretch at 35 to 202 folds into the N-acetyltransferase domain; that stretch reads SEFRCLTPED…CSLRDHPFLR (168 aa). L124 contributes to the substrate binding site. Acetyl-CoA is bound by residues 124–126 and 132–137; these read LAV and QQGRGP. M159 provides a ligand contact to substrate. Acetyl-CoA is bound at residue 168-170; it reads YER. Position 205 is a phosphoserine (S205).

The protein belongs to the acetyltransferase family. AANAT subfamily. As to quaternary structure, monomer. Interacts with several 14-3-3 proteins, including YWHAB, YWHAE, YWHAG and YWHAZ, preferentially when phosphorylated at Thr-31. Phosphorylation on Ser-205 also allows binding to YWHAZ, but with lower affinity. The interaction with YWHAZ considerably increases affinity for arylalkylamines and acetyl-CoA and protects the enzyme from dephosphorylation and proteasomal degradation. It may also prevent thiol-dependent inactivation. CAMP-dependent phosphorylation on both N-terminal Thr-31 and C-terminal Ser-205 regulates AANAT activity by promoting interaction with 14-3-3 proteins.

It localises to the cytoplasm. It catalyses the reaction a 2-arylethylamine + acetyl-CoA = an N-acetyl-2-arylethylamine + CoA + H(+). Its pathway is aromatic compound metabolism; melatonin biosynthesis; melatonin from serotonin: step 1/2. Its function is as follows. Controls the night/day rhythm of melatonin production in the pineal gland. Catalyzes the N-acetylation of serotonin into N-acetylserotonin, the penultimate step in the synthesis of melatonin. This Pan troglodytes (Chimpanzee) protein is Serotonin N-acetyltransferase (AANAT).